The chain runs to 406 residues: MSAPKKVVLAYSGGLDTSIILKWLQTEYGCEVVTFTADLGQGEELEPARAKAEMMGASDIYIEDVREEFVRDFVFPMFRANAVYEGLYLLGTSIARPLISKRLVEIAEETGADAIAHGATGKGNDQVRFELAAYALNPDIKVIAPWREWDLSSRTKLIDFAEKNQIPIAKDKRGEAPFSVDANLLHTSSEGKVLENPAVDAPDYVYQRTVNPEDAPDTPEYIEIGFEKGDAVSINGEAMSPATILTKLNEIGGKHGCGRLDLVEGRFVGMKSRGIYETPGGTLLLEAHRGIESITLDRGAMHLKDELMPRYAELIYNGFWFSPERTMLQAAIDASQTHVTGTVRLKLYKGLARTVGRWSDHSLYSEAHVTFEEDAGAYDQTDAAGFIQLNALRLKLLAARDRRLKS.

Residues 10–18 and alanine 37 contribute to the ATP site; that span reads AYSGGLDTS. Residues tyrosine 88 and serine 93 each contribute to the L-citrulline site. Glycine 118 lines the ATP pocket. Residues threonine 120, asparagine 124, and aspartate 125 each contribute to the L-aspartate site. An L-citrulline-binding site is contributed by asparagine 124. Residues arginine 128, serine 179, serine 188, glutamate 264, and tyrosine 276 each contribute to the L-citrulline site.

The protein belongs to the argininosuccinate synthase family. Type 1 subfamily. In terms of assembly, homotetramer.

It is found in the cytoplasm. The catalysed reaction is L-citrulline + L-aspartate + ATP = 2-(N(omega)-L-arginino)succinate + AMP + diphosphate + H(+). It participates in amino-acid biosynthesis; L-arginine biosynthesis; L-arginine from L-ornithine and carbamoyl phosphate: step 2/3. The chain is Argininosuccinate synthase from Roseobacter denitrificans (strain ATCC 33942 / OCh 114) (Erythrobacter sp. (strain OCh 114)).